The chain runs to 425 residues: MRSQGNMSDRLTIEVDCTSLGSNECPSMASSFSPMESPTPTPTSVYSQGSLASPTWHEGGSYPGQGYERHTGTTPMRSAFRLASMTSNDSMGMSYGQMEAQERMPMTDFLSGYDENVEHFWIPQEAQKAYEHGVPGLPYPQAMPQYSTMGRSSYRQHAAPYLPDSATNPCLSRSIFHQPERVPNSMSMGNVIPWMAPQPDSIAPQTIAPSQVAPVTPPPSYSEFSGSINTFKTHSPTTPVRSCSLGTTSGTDTPMSRLSGGMDYLDDFNQSPVYRDNLARVQRQPSRKVARKQSSKQSLSLENLPSIIKQVQFKCKEPGCKGRFKRQEHLKRHMKSHSKEKPHVCWVPGCERAFSRSDNLNAHYTKTHSKRGGRNRYVATLDENSPDYNPEYRGQLTADGRPVYNSKSQDLMPDARETSEEAWLE.

Disordered stretches follow at residues 28–72 (MASS…RHTG), 232–257 (KTHS…PMSR), and 281–301 (VQRQ…SLSL). Positions 30 to 44 (SSFSPMESPTPTPTS) are enriched in low complexity. The span at 232-256 (KTHSPTTPVRSCSLGTTSGTDTPMS) shows a compositional bias: polar residues. Residues 285 to 294 (PSRKVARKQS) are compositionally biased toward basic residues. C2H2-type zinc fingers lie at residues 321-345 (KGRF…PHVC) and 351-376 (ERAF…GRNR). Positions 365–374 (TKTHSKRGGR) are enriched in basic residues. The tract at residues 365–425 (TKTHSKRGGR…RETSEEAWLE (61 aa)) is disordered.

The protein localises to the nucleus. Functionally, brlA, abaA and wetA are pivotal regulators of conidiophore development and conidium maturation. They act individually and together to regulate their own expression and that of numerous other sporulation-specific genes. Binds promoters of target genes at brlA response elements (BREs) containing the conserved sequence 5'-(C/A)(A/G)AGGG(G/A)-3'. Also coordinates the expression of carbohydrate-active enzymes and of the key effectors of cell wall remodeling during autolysis. The sequence is that of C2H2 type master regulator of conidiophore development brlA from Aspergillus niger (strain ATCC MYA-4892 / CBS 513.88 / FGSC A1513).